A 416-amino-acid chain; its full sequence is Probable glucan 1,3-beta-glucosidase A (416 aa).

Positions 1–22 (MIFKFSQKALVALCLVVGLAEA) are cleaved as a signal peptide. The active-site Proton donor is the glutamate 211. Disulfide bonds link cysteine 291–cysteine 415 and cysteine 316–cysteine 342. Residue glutamate 308 is the Nucleophile of the active site.

It belongs to the glycosyl hydrolase 5 (cellulase A) family. Monomer. Mn(2+) serves as cofactor.

The protein localises to the secreted. The catalysed reaction is Successive hydrolysis of beta-D-glucose units from the non-reducing ends of (1-&gt;3)-beta-D-glucans, releasing alpha-glucose.. Functionally, beta-glucanases participate in the metabolism of beta-glucan, the main structural component of the cell wall. It could also function biosynthetically as a transglycosylase. The sequence is that of Probable glucan 1,3-beta-glucosidase A (exgA) from Neosartorya fischeri (strain ATCC 1020 / DSM 3700 / CBS 544.65 / FGSC A1164 / JCM 1740 / NRRL 181 / WB 181) (Aspergillus fischerianus).